The following is a 404-amino-acid chain: Nicotinate phosphoribosyltransferase (404 aa).

Residue histidine 224 is modified to Phosphohistidine; by autocatalysis.

Belongs to the NAPRTase family. Transiently phosphorylated on a His residue during the reaction cycle. Phosphorylation strongly increases the affinity for substrates and increases the rate of nicotinate D-ribonucleotide production. Dephosphorylation regenerates the low-affinity form of the enzyme, leading to product release.

The catalysed reaction is nicotinate + 5-phospho-alpha-D-ribose 1-diphosphate + ATP + H2O = nicotinate beta-D-ribonucleotide + ADP + phosphate + diphosphate. It functions in the pathway cofactor biosynthesis; NAD(+) biosynthesis; nicotinate D-ribonucleotide from nicotinate: step 1/1. Its function is as follows. Catalyzes the synthesis of beta-nicotinate D-ribonucleotide from nicotinate and 5-phospho-D-ribose 1-phosphate at the expense of ATP. This Proteus mirabilis (strain HI4320) protein is Nicotinate phosphoribosyltransferase.